The sequence spans 116 residues: Somatostatin (116 aa).

The first 24 residues, 1 to 24 (MLSCRLQCALAALSIVLALGGVTG), serve as a signal peptide directing secretion. The propeptide occupies 25-88 (APSDPRLRQF…QDEMRLELQR (64 aa)). Ala-43 is modified (alanine amide). Cys-105 and Cys-116 are joined by a disulfide.

It belongs to the somatostatin family. In terms of processing, C-terminal amidation of the neuronostatin peptide is required for its biological activity, including for the regulation of mean arterial pressure.

It is found in the secreted. Inhibits the secretion of pituitary hormones, including that of growth hormone/somatotropin (GH1), PRL, ACTH, luteinizing hormone (LH) and TSH. Also impairs ghrelin- and GnRH-stimulated secretion of GH1 and LH; the inhibition of ghrelin-stimulated secretion of GH1 can be further increased by neuronostatin. Functionally, may enhance low-glucose-induced glucagon release by pancreatic alpha cells. This effect may be mediated by binding to GPR107 and PKA activation. May regulate cardiac contractile function. May compromise cardiomyocyte viability. In the central nervous system, may impair memory retention and may affect hippocampal excitability. May also have anxiolytic and anorexigenic effects. May play a role in arterial pressure regulation. May inhibit basal, but not ghrelin- or GnRH-stimulated secretion of GH1 or LH, but does not affect the release of other pituitary hormones, including PRL, ACTH, FSH or TSH. Potentiates inhibitory action of somatostatin on ghrelin-stimulated secretion of GH1, but not that on GnRH-stimulated secretion of LH. This chain is Somatostatin (SST), found in Bos taurus (Bovine).